The chain runs to 510 residues: Histidine ammonia-lyase (510 aa).

The 5-imidazolinone (Ala-Gly) cross-link spans 143–145 (ASG). Serine 144 bears the 2,3-didehydroalanine (Ser) mark.

This sequence belongs to the PAL/histidase family. In terms of processing, contains an active site 4-methylidene-imidazol-5-one (MIO), which is formed autocatalytically by cyclization and dehydration of residues Ala-Ser-Gly.

The protein resides in the cytoplasm. The catalysed reaction is L-histidine = trans-urocanate + NH4(+). The protein operates within amino-acid degradation; L-histidine degradation into L-glutamate; N-formimidoyl-L-glutamate from L-histidine: step 1/3. The sequence is that of Histidine ammonia-lyase from Aliivibrio fischeri (strain ATCC 700601 / ES114) (Vibrio fischeri).